A 170-amino-acid polypeptide reads, in one-letter code: Ubiquitin-conjugating enzyme E2 2 (170 aa).

The 147-residue stretch at 4 to 150 (PARRRLMRDF…VKETVEKSWE (147 aa)) folds into the UBC core domain. Cysteine 88 acts as the Glycyl thioester intermediate in catalysis. The disordered stretch occupies residues 148–170 (SWEDDLKDMDDGDDDDDDDDDDD). Positions 152–170 (DLKDMDDGDDDDDDDDDDD) are enriched in acidic residues.

The protein belongs to the ubiquitin-conjugating enzyme family.

The protein resides in the cytoplasm. The protein localises to the nucleus. The enzyme catalyses S-ubiquitinyl-[E1 ubiquitin-activating enzyme]-L-cysteine + [E2 ubiquitin-conjugating enzyme]-L-cysteine = [E1 ubiquitin-activating enzyme]-L-cysteine + S-ubiquitinyl-[E2 ubiquitin-conjugating enzyme]-L-cysteine.. Its pathway is protein modification; protein ubiquitination. In terms of biological role, catalyzes the covalent attachment of ubiquitin to other proteins. Plays a role in transcription regulation by catalyzing the monoubiquitination of histone H2B to form H2BK123ub1. H2BK123ub1 gives a specific tag for epigenetic transcriptional activation and is also a prerequisite for H3K4me and H3K79me formation. Also involved in postreplication repair of UV-damaged DNA, in N-end rule-dependent protein degradation and in sporulation. The protein is Ubiquitin-conjugating enzyme E2 2 (UBC2) of Eremothecium gossypii (strain ATCC 10895 / CBS 109.51 / FGSC 9923 / NRRL Y-1056) (Yeast).